Here is a 238-residue protein sequence, read N- to C-terminus: Ribosomal RNA small subunit methyltransferase G (238 aa).

S-adenosyl-L-methionine contacts are provided by residues glycine 99, leucine 104, 122 to 124 (DAT), 150 to 151 (VE), and arginine 164.

Belongs to the methyltransferase superfamily. RNA methyltransferase RsmG family.

Its subcellular location is the cytoplasm. Specifically methylates the N7 position of a guanine in 16S rRNA. In Chlorobium luteolum (strain DSM 273 / BCRC 81028 / 2530) (Pelodictyon luteolum), this protein is Ribosomal RNA small subunit methyltransferase G.